Consider the following 170-residue polypeptide: Small ribosomal subunit protein uS13m (170 aa).

Positions 130 to 170 (LKKKPTNRKERRIFNKIKKLQDKHNKQQQKNKKSKKWKTKK) are disordered. Basic residues-rich tracts occupy residues 132-147 (KKPT…NKIK) and 155-170 (KQQQ…KTKK).

It belongs to the universal ribosomal protein uS13 family. Part of the small ribosomal subunit.

The protein localises to the mitochondrion. In terms of biological role, located at the top of the head of the small subunit, it contacts several helices of the small subunit rRNA. This chain is Small ribosomal subunit protein uS13m (mrps13), found in Dictyostelium citrinum (Slime mold).